The chain runs to 358 residues: Plancitoxin-1 (358 aa).

The N-terminal stretch at 1–26 (MPSSVIMFTFLALTVLTAVMVGTSEA) is a signal peptide. Asparagine 274 is a glycosylation site (N-linked (GlcNAc...) asparagine). The active site involves histidine 303.

This sequence belongs to the DNase II family. As to quaternary structure, plancitoxin is a heterodimer of alpha and beta subunits; disulfide-linked by a single disulfide bond. Venom gland.

It localises to the secreted. It carries out the reaction Endonucleolytic cleavage to nucleoside 3'-phosphates and 3'-phosphooligonucleotide end-products.. In terms of biological role, hydrolyzes DNA with an optimum pH of 7.2. Is potently hepatotoxic. It induces caspase-independent apoptosis (on rat liver cells) through the following procedure: binding to a specific receptor in the cytoplasmic membrane, entering the cell, entering the nucleus and degrading DNA. The sequence is that of Plancitoxin-1 from Acanthaster planci (Crown-of-thorns starfish).